The following is a 347-amino-acid chain: Olfactory receptor 2M2 (347 aa).

Residues Met1–Thr25 are Extracellular-facing. Residue Asn5 is glycosylated (N-linked (GlcNAc...) asparagine). Residues Phe26–Ile49 traverse the membrane as a helical segment. Over Tyr50–Thr57 the chain is Cytoplasmic. A helical transmembrane segment spans residues Pro58–Pro79. Topologically, residues Lys80–Gln100 are extracellular. Cys97 and Cys189 are oxidised to a cystine. A helical membrane pass occupies residues Ile101–Tyr120. At Asp121 to Lys139 the chain is on the cytoplasmic side. Residues Ile140–Ile158 form a helical membrane-spanning segment. Residues Asp159–Phe195 are Extracellular-facing. N-linked (GlcNAc...) asparagine glycosylation is present at Asn190. A helical membrane pass occupies residues Glu196 to Ala219. Residues Arg220–Lys236 are Cytoplasmic-facing. A helical transmembrane segment spans residues Ala237–Tyr259. The Extracellular portion of the chain corresponds to Ile260 to Lys272. Residues Met273–Leu292 traverse the membrane as a helical segment. Topologically, residues Arg293–Ala347 are cytoplasmic.

This sequence belongs to the G-protein coupled receptor 1 family.

Its subcellular location is the cell membrane. Its function is as follows. Odorant receptor. This is Olfactory receptor 2M2 (OR2M2) from Homo sapiens (Human).